Here is a 156-residue protein sequence, read N- to C-terminus: CASP-like protein 5C1 (156 aa).

Topologically, residues 1–24 are cytoplasmic; the sequence is MENRERAGAGAVGSAGSLGLRVEQ. Residues 25–45 traverse the membrane as a helical segment; it reads AVFSSASLLFMSVGVEFFSYT. Residue Ala-46 is a topological domain, extracellular. A helical transmembrane segment spans residues 47 to 67; sequence FCFLVTIMGLVIPWSCTLAMI. Residues 68 to 81 are Cytoplasmic-facing; that stretch reads DVYSILVGCPLRVP. The helical transmembrane segment at 82–102 threads the bilayer; the sequence is GVMVIVVIGDWVLAILSLAAA. Over 103-132 the chain is Extracellular; it reads SSSAAVIDLLLQFHGSHCSPRFCGRYQLSA. A helical transmembrane segment spans residues 133–153; the sequence is MMAFLSWFLTAASSLFNLWFI. The Cytoplasmic portion of the chain corresponds to 154–156; sequence ASR.

Belongs to the Casparian strip membrane proteins (CASP) family. As to quaternary structure, homodimer and heterodimers.

The protein resides in the cell membrane. This is CASP-like protein 5C1 from Oryza sativa subsp. indica (Rice).